The following is a 209-amino-acid chain: Uracil phosphoribosyltransferase (209 aa).

Residues Arg78, Arg103, and 130–138 (DPMLATAGS) contribute to the 5-phospho-alpha-D-ribose 1-diphosphate site. Uracil-binding positions include Ile193 and 198 to 200 (GDA). 5-phospho-alpha-D-ribose 1-diphosphate is bound at residue Asp199.

The protein belongs to the UPRTase family. Mg(2+) is required as a cofactor.

The enzyme catalyses UMP + diphosphate = 5-phospho-alpha-D-ribose 1-diphosphate + uracil. It participates in pyrimidine metabolism; UMP biosynthesis via salvage pathway; UMP from uracil: step 1/1. With respect to regulation, allosterically activated by GTP. Functionally, catalyzes the conversion of uracil and 5-phospho-alpha-D-ribose 1-diphosphate (PRPP) to UMP and diphosphate. This is Uracil phosphoribosyltransferase from Methylibium petroleiphilum (strain ATCC BAA-1232 / LMG 22953 / PM1).